A 497-amino-acid chain; its full sequence is Interferon regulatory factor 5 (497 aa).

Positions proline 12 to lysine 18 match the Nuclear localization signal motif. Positions arginine 14 to serine 122 form a DNA-binding region, IRF tryptophan pentad repeat. The interval glycine 124–threonine 178 is disordered. The span at valine 137–glutamate 148 shows a compositional bias: acidic residues. The Nuclear export signal motif lies at leucine 149–threonine 159. Serine 157 carries the phosphoserine; by TBK1 modification. Serine 300 is modified (phosphoserine). Glycyl lysine isopeptide (Lys-Gly) (interchain with G-Cter in ubiquitin) cross-links involve residues lysine 410 and lysine 411. Position 430 is a phosphoserine (serine 430). The residue at position 434 (serine 434) is a Phosphoserine; by IKKB. Phosphoserine occurs at positions 436 and 439. Serine 445 carries the post-translational modification Phosphoserine; by IKKB.

Belongs to the IRF family. As to quaternary structure, homodimer, when phosphorylated. Interacts with TASL (via pLxIS motif); interaction takes place downstream of TLR7, TLR8 or TLR9, leading to its activation. Interacts with MYD88 and TRAF6. Post-translationally, phosphorylation of serine and threonine residues by IKBKB in a C-terminal autoinhibitory region, stimulates dimerization, transport into the nucleus, assembly with the coactivator CBP/EP300 and initiation of transcription. In terms of processing, 'Lys-63'-linked polyubiquitination by TRAF6 is required for activation.

The protein localises to the cytoplasm. It localises to the nucleus. With respect to regulation, maintained as a monomer in an autoinhibited state. Phosphorylation and activation follow the following steps: innate adapter protein TASL recruits IRF5, thereby licensing IRF5 for phosphorylation by IKBKB. Phosphorylated IRF5 dissociates from the adapter proteins, dimerizes, and then enters the nucleus to induce IFNs. Its function is as follows. Transcription factor that plays a critical role in innate immunity by activating expression of type I interferon (IFN) IFNA and INFB and inflammatory cytokines downstream of endolysosomal toll-like receptors TLR7, TLR8 and TLR9. Regulates the transcription of type I IFN genes (IFN-alpha and IFN-beta) and IFN-stimulated genes (ISG) by binding to an interferon-stimulated response element (ISRE) in their promoters. Can efficiently activate both the IFN-beta (IFNB) and the IFN-alpha (IFNA) genes and mediate their induction downstream of the TLR-activated, MyD88-dependent pathway. This is Interferon regulatory factor 5 from Mus musculus (Mouse).